The following is a 487-amino-acid chain: Glutamyl-tRNA(Gln) amidotransferase subunit A (487 aa).

Catalysis depends on charge relay system residues Lys82 and Ser157. Residue Ser181 is the Acyl-ester intermediate of the active site.

The protein belongs to the amidase family. GatA subfamily. In terms of assembly, heterotrimer of A, B and C subunits.

The enzyme catalyses L-glutamyl-tRNA(Gln) + L-glutamine + ATP + H2O = L-glutaminyl-tRNA(Gln) + L-glutamate + ADP + phosphate + H(+). Allows the formation of correctly charged Gln-tRNA(Gln) through the transamidation of misacylated Glu-tRNA(Gln) in organisms which lack glutaminyl-tRNA synthetase. The reaction takes place in the presence of glutamine and ATP through an activated gamma-phospho-Glu-tRNA(Gln). The chain is Glutamyl-tRNA(Gln) amidotransferase subunit A from Fusobacterium nucleatum subsp. nucleatum (strain ATCC 25586 / DSM 15643 / BCRC 10681 / CIP 101130 / JCM 8532 / KCTC 2640 / LMG 13131 / VPI 4355).